Here is a 442-residue protein sequence, read N- to C-terminus: Methylenetetrahydrofolate--tRNA-(uracil-5-)-methyltransferase TrmFO 1 (442 aa).

9 to 14 contributes to the FAD binding site; sequence GAGLAG.

It belongs to the MnmG family. TrmFO subfamily. The cofactor is FAD.

It is found in the cytoplasm. It carries out the reaction uridine(54) in tRNA + (6R)-5,10-methylene-5,6,7,8-tetrahydrofolate + NADH + H(+) = 5-methyluridine(54) in tRNA + (6S)-5,6,7,8-tetrahydrofolate + NAD(+). The enzyme catalyses uridine(54) in tRNA + (6R)-5,10-methylene-5,6,7,8-tetrahydrofolate + NADPH + H(+) = 5-methyluridine(54) in tRNA + (6S)-5,6,7,8-tetrahydrofolate + NADP(+). Catalyzes the folate-dependent formation of 5-methyl-uridine at position 54 (M-5-U54) in all tRNAs. This Mesoplasma florum (strain ATCC 33453 / NBRC 100688 / NCTC 11704 / L1) (Acholeplasma florum) protein is Methylenetetrahydrofolate--tRNA-(uracil-5-)-methyltransferase TrmFO 1.